Reading from the N-terminus, the 53-residue chain is Sec-independent protein translocase protein TatA (53 aa).

The helical transmembrane segment at Met1–Ala21 threads the bilayer.

This sequence belongs to the TatA/E family. As to quaternary structure, the Tat system comprises two distinct complexes: a TatABC complex, containing multiple copies of TatA, TatB and TatC subunits, and a separate TatA complex, containing only TatA subunits. Substrates initially bind to the TatABC complex, which probably triggers association of the separate TatA complex to form the active translocon.

Its subcellular location is the cell inner membrane. Functionally, part of the twin-arginine translocation (Tat) system that transports large folded proteins containing a characteristic twin-arginine motif in their signal peptide across membranes. TatA could form the protein-conducting channel of the Tat system. The polypeptide is Sec-independent protein translocase protein TatA (Rickettsia typhi (strain ATCC VR-144 / Wilmington)).